Consider the following 1133-residue polypeptide: Lon protease homolog, mitochondrial (1133 aa).

The transit peptide at 1–37 (MLRTRTTKTLSTVARTTRAIQYYRSIAKTAAVSQRRF) directs the protein to the mitochondrion. Positions 38-98 (ASTLTVRDVE…ATNSGKSILA (61 aa)) are cleaved as a propeptide — removed in mature form; by autocatalysis. 2 stretches are compositionally biased toward basic and acidic residues: residues 98–117 (AKDDSTSQKKDEDVKIVPDE) and 125–143 (EPTRDDEIVNKDQEGEASK). Disordered regions lie at residues 98-176 (AKDD…KDVP) and 282-358 (ELFP…LDDI). A compositionally biased stretch (low complexity) spans 145-166 (SRSSASGGGQSSSSRSDSGDGS). Positions 182-480 (MLALPIARRP…KSLLVLKKEL (299 aa)) constitute a Lon N-terminal domain. 2 stretches are compositionally biased toward basic and acidic residues: residues 282–301 (ELFPPNEEKEKSKEQAKDTD) and 325–340 (KLEDIVVERIPDSELQ). The span at 348-358 (TEEESEELDDI) shows a compositional bias: acidic residues. Position 632 to 639 (632 to 639 (GPPGVGKT)) interacts with ATP. The segment at 839–892 (KKLSIEDSPTSSADSKPKESVSSEEKAENNAKSSSEKTKDNNSEKTSDDIEALK) is dispensable for catalytic activity. The disordered stretch occupies residues 844-889 (EDSPTSSADSKPKESVSSEEKAENNAKSSSEKTKDNNSEKTSDDIE). A compositionally biased stretch (basic and acidic residues) spans 853 to 889 (SKPKESVSSEEKAENNAKSSSEKTKDNNSEKTSDDIE). In terms of domain architecture, Lon proteolytic spans 923–1109 (TTPPGVVMGL…NDIFQKLFKD (187 aa)). Residues Ser1015 and Lys1058 contribute to the active site.

The protein belongs to the peptidase S16 family. Homohexamer. Organized in a ring with a central cavity. The ATP-binding and proteolytic domains (AP-domain) form a hexameric chamber. Oligomerization is independent of its proteolytic activity and the autocatalytic maturation of its subunits.

The protein resides in the mitochondrion matrix. The enzyme catalyses Hydrolysis of proteins in presence of ATP.. Its function is as follows. ATP-dependent serine protease that mediates the selective degradation of misfolded, unassembled or oxidatively damaged polypeptides as well as certain short-lived regulatory proteins in the mitochondrial matrix. May also have a chaperone function in the assembly of inner membrane protein complexes. Participates in the regulation of mitochondrial gene expression and in the maintenance of the integrity of the mitochondrial genome. Binds to mitochondrial DNA in a site-specific manner. Endogenous substrates include ABF2, ACO2, ILV1, ILV2, LSC1, LYS4, MGM101 and several oxidized proteins. The 2 nucleic acid-binding proteins ABF2 and MGM101 are protected from degradation by PIM1 when they are bound to DNA. The polypeptide is Lon protease homolog, mitochondrial (Saccharomyces cerevisiae (strain ATCC 204508 / S288c) (Baker's yeast)).